The chain runs to 174 residues: NADH-quinone oxidoreductase subunit B 2 (174 aa).

[4Fe-4S] cluster is bound by residues Cys-38, Cys-39, Cys-104, and Cys-133.

It belongs to the complex I 20 kDa subunit family. NDH-1 is composed of 14 different subunits. Subunits NuoB, C, D, E, F, and G constitute the peripheral sector of the complex. It depends on [4Fe-4S] cluster as a cofactor.

The protein resides in the cell membrane. The enzyme catalyses a quinone + NADH + 5 H(+)(in) = a quinol + NAD(+) + 4 H(+)(out). In terms of biological role, NDH-1 shuttles electrons from NADH, via FMN and iron-sulfur (Fe-S) centers, to quinones in the respiratory chain. The immediate electron acceptor for the enzyme in this species is believed to be ubiquinone. Couples the redox reaction to proton translocation (for every two electrons transferred, four hydrogen ions are translocated across the cytoplasmic membrane), and thus conserves the redox energy in a proton gradient. The protein is NADH-quinone oxidoreductase subunit B 2 of Chloroflexus aurantiacus (strain ATCC 29366 / DSM 635 / J-10-fl).